The sequence spans 213 residues: Pyridoxine/pyridoxamine 5'-phosphate oxidase (213 aa).

Residues Arg-9–Tyr-12 and Lys-67 contribute to the substrate site. Residues Arg-62–Lys-67, Phe-77–Thr-78, Arg-83, Lys-84, and Gln-106 each bind FMN. Tyr-124, Arg-128, and Ser-132 together coordinate substrate. Residues Gln-141 to Ser-142 and Trp-186 contribute to the FMN site. Substrate is bound at residue Arg-192–His-194. Arg-196 provides a ligand contact to FMN.

It belongs to the pyridoxamine 5'-phosphate oxidase family. Homodimer. Requires FMN as cofactor.

The enzyme catalyses pyridoxamine 5'-phosphate + O2 + H2O = pyridoxal 5'-phosphate + H2O2 + NH4(+). The catalysed reaction is pyridoxine 5'-phosphate + O2 = pyridoxal 5'-phosphate + H2O2. Its pathway is cofactor metabolism; pyridoxal 5'-phosphate salvage; pyridoxal 5'-phosphate from pyridoxamine 5'-phosphate: step 1/1. It functions in the pathway cofactor metabolism; pyridoxal 5'-phosphate salvage; pyridoxal 5'-phosphate from pyridoxine 5'-phosphate: step 1/1. In terms of biological role, catalyzes the oxidation of either pyridoxine 5'-phosphate (PNP) or pyridoxamine 5'-phosphate (PMP) into pyridoxal 5'-phosphate (PLP). This Cyanothece sp. (strain PCC 7425 / ATCC 29141) protein is Pyridoxine/pyridoxamine 5'-phosphate oxidase.